A 147-amino-acid polypeptide reads, in one-letter code: Large ribosomal subunit protein uL13 (147 aa).

The protein belongs to the universal ribosomal protein uL13 family. As to quaternary structure, part of the 50S ribosomal subunit.

Its function is as follows. This protein is one of the early assembly proteins of the 50S ribosomal subunit, although it is not seen to bind rRNA by itself. It is important during the early stages of 50S assembly. This chain is Large ribosomal subunit protein uL13, found in Frankia casuarinae (strain DSM 45818 / CECT 9043 / HFP020203 / CcI3).